The primary structure comprises 91 residues: Dynein 8 kDa light chain, flagellar outer arm (91 aa).

Belongs to the dynein light chain family. As to quaternary structure, consists of at least 3 heavy chains (alpha, beta and gamma), 2 intermediate chains and 8 light chains.

It is found in the cytoplasm. Its subcellular location is the cytoskeleton. It localises to the flagellum axoneme. This is Dynein 8 kDa light chain, flagellar outer arm from Chlamydomonas reinhardtii (Chlamydomonas smithii).